A 763-amino-acid polypeptide reads, in one-letter code: Phosphoglycerol transferase I (763 aa).

The next 4 membrane-spanning stretches (helical) occupy residues leucine 4–tryptophan 19, tryptophan 26–serine 48, tyrosine 76–leucine 98, and proline 105–alanine 127.

The protein belongs to the OpgB family.

It localises to the cell inner membrane. It catalyses the reaction a phosphatidylglycerol + a membrane-derived-oligosaccharide D-glucose = a 1,2-diacyl-sn-glycerol + a membrane-derived-oligosaccharide 6-(glycerophospho)-D-glucose.. The protein operates within glycan metabolism; osmoregulated periplasmic glucan (OPG) biosynthesis. Functionally, transfers a phosphoglycerol residue from phosphatidylglycerol to the membrane-bound nascent glucan backbones. This chain is Phosphoglycerol transferase I, found in Escherichia coli O6:H1 (strain CFT073 / ATCC 700928 / UPEC).